Consider the following 233-residue polypeptide: Apoptosis regulator Bcl-2 (233 aa).

The BH4 signature appears at 10 to 30 (DNREIVLKYIHYKLSQRGYDW). The segment at 32-86 (AGEDRPPVPPAPAPAAAPAAVAAAGASSHHRPEPPGSAAASEVPPAEGLRPAPPG) is disordered. Residues 87–101 (VHLALRQAGDEFSRR) carry the BH3 motif. The BH1 motif lies at 130–149 (ELFRDGVNWGRIVAFFEFGG). Positions 181 to 196 (NWIQDNGGWDAFVELY) match the BH2 motif. A helical transmembrane segment spans residues 208-228 (WISLKTILSLVLVGACITLGA).

Belongs to the Bcl-2 family. As to quaternary structure, forms homodimers, and heterodimers with BAX, BAD, BAK and Bcl-X(L). Heterodimerization with BAX requires intact BH1 and BH2 motifs, and is necessary for anti-apoptotic activity. Also interacts with APAF1 and RAF-1. In adult chicken expressed, in thymus, spleen, kidney, heart, ovary and brain, with the highest levels in the thymus. In the embryo, highly levels expressed in all tissues with high levels in the bursa of Fabricius.

It localises to the mitochondrion outer membrane. The protein resides in the nucleus membrane. It is found in the endoplasmic reticulum membrane. The protein localises to the cytoplasm. Functionally, suppresses apoptosis in a variety of cell systems including factor-dependent lymphohematopoietic and neural cells. Regulates cell death by controlling the mitochondrial membrane permeability. Appears to function in a feedback loop system with caspases. Inhibits caspase activity either by preventing the release of cytochrome c from the mitochondria and/or by binding to the apoptosis-activating factor (APAF-1). This chain is Apoptosis regulator Bcl-2 (BCL2), found in Gallus gallus (Chicken).